Reading from the N-terminus, the 349-residue chain is Protein MULTIPLE CHLOROPLAST DIVISION SITE 1 (349 aa).

The transit peptide at 1 to 52 (MASIDSLQFHSLCNLQSSIGRAKLQNPSSLVIFRRRPVNLNWVQFETKGSFV) directs the protein to the chloroplast. Topologically, residues 53-116 (CKAIGDSSTP…VVFLMKKCSV (64 aa)) are chloroplast intermembrane. The helical transmembrane segment at 117–139 (NSIWIGVCITATVLVAAIRAYVV) threads the bilayer. Residues 140–349 (RKSRDNQRAG…NSSSEETHKS (210 aa)) are Stromal-facing. Residues 315–349 (QRPYKFSAKLEGENIQKNSQENHTGNSSSEETHKS) are disordered. The segment covering 329 to 343 (IQKNSQENHTGNSSS) has biased composition (polar residues).

In terms of assembly, interacts with MIND1. Interacts with ARC6 in the chloroplast stroma and binds to FtsZ2-1 in an ARC6-dependent manner.

It localises to the plastid. The protein localises to the chloroplast inner membrane. In terms of biological role, required for chloroplast division. Together with MIND1 and ARC3, regulates FtsZ ring positioning in chloroplasts in an ARC6-dependent manner. Determines the site of chloroplast division in concert with MIND1. Not directly involved in ring formation, but required for MIND1 and MINE1 localization to regulate FtsZ ring formation during plastidial constriction. The sequence is that of Protein MULTIPLE CHLOROPLAST DIVISION SITE 1 from Arabidopsis thaliana (Mouse-ear cress).